The primary structure comprises 1273 residues: DNA-directed RNA polymerase subunit beta (1273 aa).

The interval 1252–1273 is disordered; sequence ADDQDLVVSSNDEEVSENDERS.

The protein belongs to the RNA polymerase beta chain family. The RNAP catalytic core consists of 2 alpha, 1 beta, 1 beta' and 1 omega subunit. When a sigma factor is associated with the core the holoenzyme is formed, which can initiate transcription.

The enzyme catalyses RNA(n) + a ribonucleoside 5'-triphosphate = RNA(n+1) + diphosphate. DNA-dependent RNA polymerase catalyzes the transcription of DNA into RNA using the four ribonucleoside triphosphates as substrates. This Dehalococcoides mccartyi (strain CBDB1) protein is DNA-directed RNA polymerase subunit beta.